An 83-amino-acid chain; its full sequence is Insect toxin 2-13 (83 aa).

The first 21 residues, 1 to 21 (MKLLLLLIITASMLIEGLVNA), serve as a signal peptide directing secretion. The 59-residue stretch at 22–80 (DVYIRRHDGCKISCTVNDKYCDNECKSEGGSYGYCYAFGCWCEGLPNDKAWKSETNTCG) folds into the LCN-type CS-alpha/beta domain. 4 disulfides stabilise this stretch: cysteine 31/cysteine 79, cysteine 35/cysteine 56, cysteine 42/cysteine 61, and cysteine 46/cysteine 63. Residue glycine 80 is modified to Glycine amide.

This sequence belongs to the long (4 C-C) scorpion toxin superfamily. Sodium channel inhibitor family. Beta subfamily. As to expression, expressed by the venom gland.

It localises to the secreted. Its function is as follows. Depressant insect toxins cause a transient contraction paralysis followed by a slow flaccid paralysis. They bind voltage-independently to sodium channels (Nav) and block action potentials, primarily by depolarizing the axonal membrane and suppressing the sodium current. This chain is Insect toxin 2-13, found in Leiurus hebraeus (Hebrew deathstalker scorpion).